Consider the following 716-residue polypeptide: Polyribonucleotide nucleotidyltransferase (716 aa).

The Mg(2+) site is built by Asp480 and Asp486. Positions 547–606 (PKIVQLQIDIDKISLVIGSTGKTVKAITDEFEVKVQIEQNGKIILFGDDDFKMQKAKERI) constitute a KH domain. Positions 616-711 (GEIYEGTVKK…KFGKIDLEIV (96 aa)) constitute an S1 motif domain.

The protein belongs to the polyribonucleotide nucleotidyltransferase family. The cofactor is Mg(2+).

The protein resides in the cytoplasm. The catalysed reaction is RNA(n+1) + phosphate = RNA(n) + a ribonucleoside 5'-diphosphate. In terms of biological role, involved in mRNA degradation. Catalyzes the phosphorolysis of single-stranded polyribonucleotides processively in the 3'- to 5'-direction. This Borreliella burgdorferi (strain ATCC 35210 / DSM 4680 / CIP 102532 / B31) (Borrelia burgdorferi) protein is Polyribonucleotide nucleotidyltransferase.